A 159-amino-acid polypeptide reads, in one-letter code: Probable metallophosphoesterase MPN_126 (159 aa).

Positions 9, 11, 34, 53, 75, 107, and 109 each coordinate Mn(2+).

The protein belongs to the metallophosphoesterase superfamily. YfcE family. Mn(2+) serves as cofactor.

In Mycoplasma pneumoniae (strain ATCC 29342 / M129 / Subtype 1) (Mycoplasmoides pneumoniae), this protein is Probable metallophosphoesterase MPN_126.